We begin with the raw amino-acid sequence, 431 residues long: Serine/threonine-protein kinase Sgk1 (431 aa).

The interval Met1–Ile60 is necessary for localization to the mitochondria. Positions Gln64–His92 are disordered. The residue at position 74 (Ser74) is a Phosphoserine. Phosphoserine; by MAPK7 is present on Ser78. The segment covering Gln81–Pro91 has biased composition (polar residues). The Protein kinase domain occupies Phe98 to Phe355. ATP is bound by residues Ile104–Val112 and Lys127. The Nuclear localization signal motif lies at Lys131–Lys141. Asp222 functions as the Proton acceptor in the catalytic mechanism. Thr256 is subject to Phosphothreonine; by PDPK1. The AGC-kinase C-terminal domain maps to Ser356 to Leu431. Thr369 carries the post-translational modification Phosphothreonine; by PKA. A phosphoserine mark is found at Ser397, Ser401, and Ser422.

It belongs to the protein kinase superfamily. AGC Ser/Thr protein kinase family. In terms of assembly, homodimer; disulfide-linked. Forms a trimeric complex with FBXW7 and NOTCH1. Interacts with MAPK3/ERK1, MAPK1/ERK2, MAP2K1/MEK1, MAP2K2/MEK2, NEDD4, NEDD4L, MAPT/TAU, MAPK7, CREB1, SLC9A3R2/NHERF2 and KCNJ1/ROMK1. Associates with the mammalian target of rapamycin complex 2 (mTORC2) via an interaction with MAPKAP1/SIN1. Regulated by phosphorylation. Activated by phosphorylation on Ser-422 by mTORC2, transforming it into a substrate for PDPK1 which phosphorylates it on Thr-256. Phosphorylation on Ser-397 and Ser-401 are also essential for its activity. Phosphorylation on Ser-78 by MAPK7 is required for growth factor-induced cell cycle progression. Post-translationally, ubiquitinated by NEDD4L; which promotes proteasomal degradation. Ubiquitinated by SYVN1 at the endoplasmic reticulum; which promotes rapid proteasomal degradation and maintains a high turnover rate in resting cells.

It is found in the cytoplasm. Its subcellular location is the nucleus. It localises to the endoplasmic reticulum membrane. The protein localises to the cell membrane. The protein resides in the mitochondrion. The catalysed reaction is L-seryl-[protein] + ATP = O-phospho-L-seryl-[protein] + ADP + H(+). It catalyses the reaction L-threonyl-[protein] + ATP = O-phospho-L-threonyl-[protein] + ADP + H(+). Its activity is regulated as follows. Two specific sites, one in the kinase domain (Thr-256) and the other in the C-terminal regulatory region (Ser-422), need to be phosphorylated for its full activation. Phosphorylation at Ser-397 and Ser-401 are also essential for its activity. Activated by WNK1, WNK2, WNK3 and WNK4; which promote phosphorylation by mTORC2. Functionally, serine/threonine-protein kinase which is involved in the regulation of a wide variety of ion channels, membrane transporters, cellular enzymes, transcription factors, neuronal excitability, cell growth, proliferation, survival, migration and apoptosis. Plays an important role in cellular stress response. Contributes to regulation of renal Na(+) retention, renal K(+) elimination, salt appetite, gastric acid secretion, intestinal Na(+)/H(+) exchange and nutrient transport, insulin-dependent salt sensitivity of blood pressure, salt sensitivity of peripheral glucose uptake, cardiac repolarization and memory consolidation. Up-regulates Na(+) channels: SCNN1A/ENAC, SCN5A and ASIC1/ACCN2, K(+) channels: KCNJ1/ROMK1, KCNA1-5, KCNQ1-5 and KCNE1, epithelial Ca(2+) channels: TRPV5 and TRPV6, chloride channels: BSND, CLCN2 and CFTR, glutamate transporters: SLC1A3/EAAT1, SLC1A2 /EAAT2, SLC1A1/EAAT3, SLC1A6/EAAT4 and SLC1A7/EAAT5, amino acid transporters: SLC1A5/ASCT2, SLC38A1/SN1 and SLC6A19, creatine transporter: SLC6A8, Na(+)/dicarboxylate cotransporter: SLC13A2/NADC1, Na(+)-dependent phosphate cotransporter: SLC34A2/NAPI-2B, glutamate receptor: GRIK2/GLUR6. Up-regulates carriers: SLC9A3/NHE3, SLC12A1/NKCC2, SLC12A3/NCC, SLC5A3/SMIT, SLC2A1/GLUT1, SLC5A1/SGLT1 and SLC15A2/PEPT2. Regulates enzymes: GSK3A/B, PMM2 and Na(+)/K(+) ATPase, and transcription factors: CTNNB1 and nuclear factor NF-kappa-B. Stimulates sodium transport into epithelial cells by enhancing the stability and expression of SCNN1A/ENAC. This is achieved by phosphorylating the NEDD4L ubiquitin E3 ligase, promoting its interaction with 14-3-3 proteins, thereby preventing it from binding to SCNN1A/ENAC and targeting it for degradation. Regulates store-operated Ca(+2) entry (SOCE) by stimulating ORAI1 and STIM1. Regulates KCNJ1/ROMK1 directly via its phosphorylation or indirectly via increased interaction with SLC9A3R2/NHERF2. Phosphorylates MDM2 and activates MDM2-dependent ubiquitination of p53/TP53. Phosphorylates MAPT/TAU and mediates microtubule depolymerization and neurite formation in hippocampal neurons. Phosphorylates SLC2A4/GLUT4 and up-regulates its activity. Phosphorylates APBB1/FE65 and promotes its localization to the nucleus. Phosphorylates MAPK1/ERK2 and activates it by enhancing its interaction with MAP2K1/MEK1 and MAP2K2/MEK2. Phosphorylates FBXW7 and plays an inhibitory role in the NOTCH1 signaling. Phosphorylates FOXO1 resulting in its relocalization from the nucleus to the cytoplasm. Phosphorylates FOXO3, promoting its exit from the nucleus and interference with FOXO3-dependent transcription. Phosphorylates BRAF and MAP3K3/MEKK3 and inhibits their activity. Phosphorylates SLC9A3/NHE3 in response to dexamethasone, resulting in its activation and increased localization at the cell membrane. Phosphorylates CREB1. Necessary for vascular remodeling during angiogenesis. The chain is Serine/threonine-protein kinase Sgk1 (SGK1) from Bos taurus (Bovine).